A 786-amino-acid polypeptide reads, in one-letter code: Receptor-like protein 30 (786 aa).

Positions 1–30 are cleaved as a signal peptide; that stretch reads MIPSQSNSFSGSVITLYFFLLGSLVLRTLA. Residues 31 to 739 lie on the Extracellular side of the membrane; the sequence is SSRLHYCRHD…SEPEEQVINW (709 aa). Asn-67, Asn-98, Asn-115, and Asn-133 each carry an N-linked (GlcNAc...) asparagine glycan. 4 LRR repeats span residues 110 to 133, 134 to 158, 159 to 181, and 183 to 204; these read LQQL…SLGN, LSRL…VSKL, NQLR…SFTN, and TKLS…SFIL. N-linked (GlcNAc...) asparagine glycans are attached at residues Asn-181, Asn-199, and Asn-206. LRR repeat units lie at residues 207-231, 233-255, 257-279, 280-304, 305-328, 329-352, 354-375, 376-399, 400-423, 425-447, 448-472, 474-496, 497-524, and 526-546; these read LTSL…MSGL, NLKY…LFTI, SLQI…NISS, SSRL…ISEI, HSLI…ISKL, VNLQ…LWGL, TVTL…ALDG, ESMQ…ICKQ, RFLK…LKNS, YWLK…VFVN, ASML…LINC, GMEL…LVSL, PSLR…GFQH, and RLID…YFSN. N-linked (GlcNAc...) asparagine glycosylation is present at Asn-276. Asn-338 carries N-linked (GlcNAc...) asparagine glycosylation. N-linked (GlcNAc...) asparagine glycosylation is found at Asn-413, Asn-422, Asn-434, Asn-447, and Asn-471. Asn-558 is a glycosylation site (N-linked (GlcNAc...) asparagine). 4 LRR repeats span residues 596-621, 622-645, 646-669, and 671-694; these read IPYF…VGLL, KELR…LANL, TNLE…LGSL, and FLST…QFQS. N-linked (GlcNAc...) asparagine glycosylation is found at Asn-628 and Asn-644. An N-linked (GlcNAc...) asparagine glycan is attached at Asn-676. The helical transmembrane segment at 740–760 threads the bilayer; that stretch reads IAAAIAYGPGVFCGLVIGHIF. Residues 761-786 lie on the Cytoplasmic side of the membrane; sequence FTAHKHEWFMEKFHRNKRRVVTTSAR.

Belongs to the RLP family.

The protein resides in the cell membrane. Its function is as follows. Receptor for microbe-associated molecular patterns (MAMPs) that induces a BAK1-dependent basal immune response to necrotrophic fungi (e.g. S.sclerotiorum) in the presence of MAMPs (e.g. flg22 and SCLEROTINIA CULTURE FILTRATE ELICITOR1 (SCFE1) from the necrotrophic fungal pathogen S.sclerotiorum). Functionality seems to depend on the presence of the receptor kinase SOBIR1 as an adapter protein. Required for full non-host resistance to bacterial pathogens (e.g. P.syringae pv phaseolicola). The chain is Receptor-like protein 30 from Arabidopsis thaliana (Mouse-ear cress).